We begin with the raw amino-acid sequence, 305 residues long: Glycine--tRNA ligase alpha subunit (305 aa).

It belongs to the class-II aminoacyl-tRNA synthetase family. Tetramer of two alpha and two beta subunits.

It is found in the cytoplasm. It catalyses the reaction tRNA(Gly) + glycine + ATP = glycyl-tRNA(Gly) + AMP + diphosphate. The sequence is that of Glycine--tRNA ligase alpha subunit from Streptococcus pneumoniae (strain ATCC BAA-255 / R6).